A 355-amino-acid polypeptide reads, in one-letter code: Uroporphyrinogen decarboxylase (355 aa).

Substrate is bound by residues 27–31, Phe46, Asp77, Tyr154, Thr209, and His328; that span reads RQAGR.

It belongs to the uroporphyrinogen decarboxylase family. In terms of assembly, homodimer.

It localises to the cytoplasm. It carries out the reaction uroporphyrinogen III + 4 H(+) = coproporphyrinogen III + 4 CO2. The protein operates within porphyrin-containing compound metabolism; protoporphyrin-IX biosynthesis; coproporphyrinogen-III from 5-aminolevulinate: step 4/4. Catalyzes the decarboxylation of four acetate groups of uroporphyrinogen-III to yield coproporphyrinogen-III. The chain is Uroporphyrinogen decarboxylase from Vibrio vulnificus (strain CMCP6).